A 74-amino-acid chain; its full sequence is uncharacterized protein (74 aa).

Residues 15–32 form a helical membrane-spanning segment; sequence FLHALTVTFLSDIFVWLV.

It is found in the membrane. This is an uncharacterized protein from Saccharomyces cerevisiae (strain ATCC 204508 / S288c) (Baker's yeast).